A 132-amino-acid polypeptide reads, in one-letter code: Small ribosomal subunit protein uS8 (132 aa).

Belongs to the universal ribosomal protein uS8 family. In terms of assembly, part of the 30S ribosomal subunit. Contacts proteins S5 and S12.

Its function is as follows. One of the primary rRNA binding proteins, it binds directly to 16S rRNA central domain where it helps coordinate assembly of the platform of the 30S subunit. The chain is Small ribosomal subunit protein uS8 from Treponema pallidum (strain Nichols).